The chain runs to 319 residues: Peroxidase 62 (319 aa).

An N-terminal signal peptide occupies residues 1-22 (MGLVRSFALVIVFLSCLIAVYG). 4 disulfides stabilise this stretch: Cys34/Cys110, Cys67/Cys72, Cys116/Cys315, and Cys195/Cys226. His65 serves as the catalytic Proton acceptor. Ca(2+) is bound by residues Asp66, Val69, Gly71, Asp73, and Ser75. Residue Pro157 participates in substrate binding. His188 contacts heme b. Position 189 (Thr189) interacts with Ca(2+). Asn204 is a glycosylation site (N-linked (GlcNAc...) asparagine). 3 residues coordinate Ca(2+): Asp239, Ser242, and Asp247. Asn253 is a glycosylation site (N-linked (GlcNAc...) asparagine).

Belongs to the peroxidase family. Classical plant (class III) peroxidase subfamily. Requires heme b as cofactor. Ca(2+) is required as a cofactor. As to expression, mainly expressed in roots.

The protein resides in the secreted. The enzyme catalyses 2 a phenolic donor + H2O2 = 2 a phenolic radical donor + 2 H2O. Functionally, removal of H(2)O(2), oxidation of toxic reductants, biosynthesis and degradation of lignin, suberization, auxin catabolism, response to environmental stresses such as wounding, pathogen attack and oxidative stress. These functions might be dependent on each isozyme/isoform in each plant tissue. The protein is Peroxidase 62 (PER62) of Arabidopsis thaliana (Mouse-ear cress).